The following is a 398-amino-acid chain: Ornithine aminotransferase (398 aa).

The residue at position 255 (K255) is an N6-(pyridoxal phosphate)lysine.

This sequence belongs to the class-III pyridoxal-phosphate-dependent aminotransferase family. OAT subfamily. It depends on pyridoxal 5'-phosphate as a cofactor.

Its subcellular location is the cytoplasm. The catalysed reaction is a 2-oxocarboxylate + L-ornithine = L-glutamate 5-semialdehyde + an L-alpha-amino acid. It functions in the pathway amino-acid biosynthesis; L-proline biosynthesis; L-glutamate 5-semialdehyde from L-ornithine: step 1/1. In terms of biological role, catalyzes the interconversion of ornithine to glutamate semialdehyde. This is Ornithine aminotransferase from Geobacillus sp. (strain WCH70).